A 622-amino-acid chain; its full sequence is Prothrombin (622 aa).

The first 24 residues, 1–24 (MAHVRGLQLPGCLALAALCSLVHS), serve as a signal peptide directing secretion. Residues 25–43 (QHVFLAPQQARSLLQRVRR) constitute a propeptide that is removed on maturation. Positions 44–89 (ANTFLEEVRKGNLERECVEETCSYEEAFEALESSTATDVFWAKYTA) constitute a Gla domain. A 4-carboxyglutamate mark is found at Glu-49, Glu-50, Glu-57, Glu-59, Glu-62, Glu-63, Glu-68, Glu-69, Glu-72, and Glu-75. An intrachain disulfide couples Cys-60 to Cys-65. 11 disulfides stabilise this stretch: Cys-90–Cys-103, Cys-108–Cys-186, Cys-129–Cys-169, Cys-157–Cys-181, Cys-213–Cys-291, Cys-234–Cys-274, Cys-262–Cys-286, Cys-336–Cys-482, Cys-391–Cys-407, Cys-536–Cys-550, and Cys-564–Cys-594. Kringle domains follow at residues 108–186 (CAEG…IPVC) and 213–291 (CVPD…LNYC). 2 N-linked (GlcNAc...) (complex) asparagine glycosylation sites follow: Asn-121 and Asn-143. The Peptidase S1 domain maps to 364 to 618 (IVEGSDAEIG…LKKWIQKVID (255 aa)). The Charge relay system role is filled by His-406. A glycan (N-linked (GlcNAc...) (complex) asparagine) is linked at Asn-416. Asp-462 serves as the catalytic Charge relay system. Positions 551–573 (AGYKPDEGKRGDACEGDSGGPFV) are high affinity receptor-binding region which is also known as the TP508 peptide. The active-site Charge relay system is the Ser-568.

It belongs to the peptidase S1 family. In terms of assembly, heterodimer (named alpha-thrombin) of a light and a heavy chain; disulfide-linked. Forms a heterodimer with SERPINA5. In plasma, interacts (via N-terminus) with alpha-1-microglobulin with molar ratio 1:2 and 1:1; this interaction does not prevent the activation of prothrombin to thrombin. Interacts (thrombin) with iripin-8, a serine protease inhibitor from Ixodes ricinus saliva. Interacts (thrombin) with iripin-3, a serine protease inhibitor from Ixodes ricinus saliva. Interacts (thrombin) with Anopheles albimanus salivary thrombin inhibitor anophelin; the interaction results in thrombin inhibition. Interacts (thrombin) with Anopheles gambiae salivary thrombin inhibitor anophelin; the interaction results in thrombin inhibition. Interacts (thrombin) with Amblyomma variegatum variegin; the interaction results in thrombin inhibition. Interacts (thrombin) with Xenopsylla cheopis salivary thrombin inhibitor XC-42. Interacts (thrombin) with Xenopsylla cheopis salivary thrombin inhibitor XC-43. Post-translationally, the gamma-carboxyglutamyl residues, which bind calcium ions, result from the carboxylation of glutamyl residues by a microsomal enzyme, the vitamin K-dependent carboxylase. The modified residues are necessary for the calcium-dependent interaction with a negatively charged phospholipid surface, which is essential for the conversion of prothrombin to thrombin. In terms of processing, N-glycosylated. N-glycan heterogeneity at Asn-121: Hex3HexNAc3 (minor), Hex4HexNAc3 (minor) and Hex5HexNAc4 (major). At Asn-143: Hex4HexNAc3 (minor) and Hex5HexNAc4 (major). In the penultimate step of the coagulation cascade, prothrombin is converted to thrombin by the prothrombinase complex composed of factor Xa (F10), cofactor Va (F5), and phospholipids. This activation requires factor Xa-catalyzed sequential cleavage at 2 sites, Arg-314 and Arg-363, along 2 possible pathways. In the first pathway, the first cleavage occurs at Arg-314, leading to the formation of the inactive intermediate prethrombin-2. This pathway preferentially occurs on platelets and in the absence of cofactor Va. In the second pathway, the first cleavage occurs at Arg-363, which separates protease domain into 2 chains that remain connected through a disulfide bond and generates the active intermediate meizothrombin. The presence of cofactor Va directs activation along the meizothrombin pathway and greatly accelerates the rate of cleavage at Arg-363, but has a smaller effect on the cleavage of meizothrombin at Arg-314. Meizothrombin accumulates as an intermediate when prothrombinase is assembled on the membrane of red blood cells. As to expression, expressed by the liver and secreted in plasma.

It is found in the secreted. The protein resides in the extracellular space. It catalyses the reaction Selective cleavage of Arg-|-Gly bonds in fibrinogen to form fibrin and release fibrinopeptides A and B.. Activity is promoted in the presence of negatively charged surfaces, such as polyphosphate and dextran sulfate. Inhibited by SERPINA5. Its function is as follows. Thrombin, which cleaves bonds after Arg and Lys, converts fibrinogen to fibrin and activates factors V, VII, VIII, XIII, and, in complex with thrombomodulin, protein C. Functions in blood homeostasis, inflammation and wound healing. Activates coagulation factor XI (F11); activation is promoted by the contact with negatively charged surfaces. Triggers the production of pro-inflammatory cytokines, such as MCP-1/CCL2 and IL8/CXCL8, in endothelial cells. The sequence is that of Prothrombin (F2) from Homo sapiens (Human).